Consider the following 307-residue polypeptide: MELLFLGTGAGIPAKTRNVTSVALKLLEERRSVWLFDCGEATQHQILHTSIKPRKIEKIFITHLHGDHVYGLPGLVSSRSFQGGEGPLTVYGPQGIKTFLETALDVSGTHVTYPLVIKEIGEGTVFEDDQFIVTARSVSHGIPAFGYRVQEKDVPGALDAEALKEIGVSPGPVYQKLKNGETVTLEDGRTIHGADFIGPPKKGRIVAFSGDTRPCENVKRLAEKADVLIHEATFAKGDRELAGDYYHSTSEQAAETAREACAKKLILTHISARYQGENVLELVDEAKAIFPDTVAAFDFYEHEIKRT.

Residues His63, His65, Asp67, His68, His140, Asp211, and His269 each coordinate Zn(2+). Residue Asp67 is the Proton acceptor of the active site.

It belongs to the RNase Z family. As to quaternary structure, homodimer. Zn(2+) is required as a cofactor.

It catalyses the reaction Endonucleolytic cleavage of RNA, removing extra 3' nucleotides from tRNA precursor, generating 3' termini of tRNAs. A 3'-hydroxy group is left at the tRNA terminus and a 5'-phosphoryl group is left at the trailer molecule.. Its function is as follows. Zinc phosphodiesterase, which displays some tRNA 3'-processing endonuclease activity. Probably involved in tRNA maturation, by removing a 3'-trailer from precursor tRNA. This is Ribonuclease Z from Bacillus licheniformis (strain ATCC 14580 / DSM 13 / JCM 2505 / CCUG 7422 / NBRC 12200 / NCIMB 9375 / NCTC 10341 / NRRL NRS-1264 / Gibson 46).